Here is an 81-residue protein sequence, read N- to C-terminus: ATP synthase subunit c, chloroplastic (81 aa).

2 helical membrane passes run 7 to 27 and 57 to 77; these read AASVIAAGLSVGLASIGPGIG and LAFMEALTIYGLVVALALLFA.

This sequence belongs to the ATPase C chain family. F-type ATPases have 2 components, F(1) - the catalytic core - and F(0) - the membrane proton channel. F(1) has five subunits: alpha(3), beta(3), gamma(1), delta(1), epsilon(1). F(0) has four main subunits: a(1), b(1), b'(1) and c(10-14). The alpha and beta chains form an alternating ring which encloses part of the gamma chain. F(1) is attached to F(0) by a central stalk formed by the gamma and epsilon chains, while a peripheral stalk is formed by the delta, b and b' chains.

Its subcellular location is the plastid. It localises to the chloroplast thylakoid membrane. Functionally, f(1)F(0) ATP synthase produces ATP from ADP in the presence of a proton or sodium gradient. F-type ATPases consist of two structural domains, F(1) containing the extramembraneous catalytic core and F(0) containing the membrane proton channel, linked together by a central stalk and a peripheral stalk. During catalysis, ATP synthesis in the catalytic domain of F(1) is coupled via a rotary mechanism of the central stalk subunits to proton translocation. In terms of biological role, key component of the F(0) channel; it plays a direct role in translocation across the membrane. A homomeric c-ring of between 10-14 subunits forms the central stalk rotor element with the F(1) delta and epsilon subunits. This is ATP synthase subunit c, chloroplastic from Cryptomeria japonica (Japanese cedar).